A 270-amino-acid chain; its full sequence is Extracellular metalloprotease MCYG_04966 (270 aa).

The N-terminal stretch at 1-19 (MRLSLFLSGLAAAGSIVSA) is a signal peptide. An N-linked (GlcNAc...) asparagine glycan is attached at Asn-135. A Zn(2+)-binding site is contributed by His-184. Glu-185 is an active-site residue. His-188 serves as a coordination point for Zn(2+). N-linked (GlcNAc...) asparagine glycosylation occurs at Asn-199. Positions 208 to 227 (VADTPPQSKKTSGCPNSQDS) are disordered. Residues 212–227 (PPQSKKTSGCPNSQDS) are compositionally biased toward polar residues. Cys-221 and Cys-247 form a disulfide bridge.

The protein belongs to the peptidase M43B family.

The protein resides in the secreted. Its function is as follows. Secreted metalloproteinase that allows assimilation of proteinaceous substrates. Plays a pivotal role as a pathogenicity determinant during infections and contributes to the ability of the pathogen to persist within the mammalian host. This chain is Extracellular metalloprotease MCYG_04966, found in Arthroderma otae (strain ATCC MYA-4605 / CBS 113480) (Microsporum canis).